The primary structure comprises 347 residues: Quinolinate synthase (347 aa).

Iminosuccinate is bound by residues His-47 and Ser-68. Cys-113 serves as a coordination point for [4Fe-4S] cluster. Residues 139–141 (YAN) and Ser-156 each bind iminosuccinate. Cys-200 lines the [4Fe-4S] cluster pocket. Iminosuccinate contacts are provided by residues 226-228 (HPE) and Thr-243. Cys-297 is a [4Fe-4S] cluster binding site.

Belongs to the quinolinate synthase family. Type 1 subfamily. The cofactor is [4Fe-4S] cluster.

It localises to the cytoplasm. It carries out the reaction iminosuccinate + dihydroxyacetone phosphate = quinolinate + phosphate + 2 H2O + H(+). It functions in the pathway cofactor biosynthesis; NAD(+) biosynthesis; quinolinate from iminoaspartate: step 1/1. In terms of biological role, catalyzes the condensation of iminoaspartate with dihydroxyacetone phosphate to form quinolinate. This Salmonella heidelberg (strain SL476) protein is Quinolinate synthase.